The sequence spans 1888 residues: Eukaryotic translation initiation factor 4G (1888 aa).

Disordered stretches follow at residues 1–259 (MSFN…PTTP), 391–420 (FDNKQSNAYADTGTSGPRPPYNLPSQTQPL), 449–662 (PLPS…SLQH), 726–761 (VAHSSSPENPGLGNVKNLDLISDDNQDTSSKEKNSE), 838–903 (ADVS…DGEV), 961–1042 (AYKR…SGDR), 1083–1138 (TNVS…DPRL), 1331–1356 (GEREQEEANKVEEEGEVKQSEEEREE), 1462–1605 (KWQQ…PGDL), and 1639–1691 (RFAG…PSLP). 2 stretches are compositionally biased toward polar residues: residues 13-36 (GYTQYRKSGRSNNFNPQRGSSGTH) and 75-84 (VNSTDSSNAP). Residues 171–183 (DEQKRDQARHESF) are compositionally biased toward basic and acidic residues. The segment covering 185 to 195 (PVPPMPIPLAP) has biased composition (pro residues). 4 stretches are compositionally biased toward polar residues: residues 211-231 (NVGQQLQQKDTGIINQPNTGD), 244-259 (ASPNHPTNQTQKPTTP), 393-405 (NKQSNAYADTGTS), and 458-475 (NSQPHRFNYPVSQGSQNV). Residues 497–506 (PNREHTRDTH) are compositionally biased toward basic and acidic residues. Over residues 586 to 596 (IKSSPVISKQF) the composition is skewed to polar residues. The segment covering 603–630 (VSLESQDSSSVQSSLTASSEESELAVAH) has biased composition (low complexity). A compositionally biased stretch (basic and acidic residues) spans 631 to 645 (SEVRRENLLGSDLHK). Low complexity predominate over residues 840 to 850 (VSASVSSSSTV). The segment covering 869 to 885 (NMSSNEVLKNVVKSDQP) has biased composition (polar residues). The segment covering 963–983 (KRPEEKKETVAHSESIERTES) has biased composition (basic and acidic residues). The tract at residues 1048–1093 (KKYSRDFLLKFAEQFLDLPHNFEVTSDIESLMSTHTNVSHHHDRDP) is EIF4E-binding. The span at 1109-1124 (RLDRRGSNLVDDDRWS) shows a compositional bias: basic and acidic residues. One can recognise an MIF4G domain in the interval 1239–1462 (QRQLKAILNK…KDAIDLRKNK (224 aa)). 2 stretches are compositionally biased toward basic and acidic residues: residues 1467 to 1484 (RKVEGPKKIEEVHRDAAQ) and 1661 to 1674 (KDLRHSGRSFDRSR). The MI domain occupies 1700 to 1824 (RLQQLSLTAI…SLREVADLIC (125 aa)).

It belongs to the eukaryotic initiation factor 4G family. In terms of assembly, EIF4F is a multi-subunit complex, the composition of which varies with external and internal environmental conditions. It is composed of at least EIF4A, EIF4E and EIF4G. Interacts directly with eIF4E. In higher plants two isoforms of EIF4F have been identified, named isoform EIF4F and isoform EIF(iso)4F. Isoform EIF4F has subunits p220 and p26, whereas isoform EIF(iso)4F has subunits p82 and p28.

Functionally, component of the protein complex eIF4F, which is involved in the recognition of the mRNA cap, ATP-dependent unwinding of 5'-terminal secondary structure and recruitment of mRNA to the ribosome. The protein is Eukaryotic translation initiation factor 4G of Cucumis melo (Muskmelon).